The primary structure comprises 398 residues: Argininosuccinate synthase (398 aa).

ATP-binding positions include 9-17 and alanine 37; that span reads AYSGGVDTS. Tyrosine 88 lines the L-citrulline pocket. Residue glycine 118 coordinates ATP. L-aspartate contacts are provided by threonine 120, asparagine 124, and aspartate 125. Asparagine 124 serves as a coordination point for L-citrulline. Residues arginine 128, serine 176, serine 185, glutamate 261, and tyrosine 273 each contribute to the L-citrulline site.

The protein belongs to the argininosuccinate synthase family. Type 1 subfamily. Homotetramer.

The protein resides in the cytoplasm. The catalysed reaction is L-citrulline + L-aspartate + ATP = 2-(N(omega)-L-arginino)succinate + AMP + diphosphate + H(+). The protein operates within amino-acid biosynthesis; L-arginine biosynthesis; L-arginine from L-ornithine and carbamoyl phosphate: step 2/3. This Gloeobacter violaceus (strain ATCC 29082 / PCC 7421) protein is Argininosuccinate synthase.